A 379-amino-acid chain; its full sequence is Cytokine receptor common subunit gamma (379 aa).

Residues 1-22 (MLKPPLPLRSLLFLQLPLLGVG) form the signal peptide. The Extracellular portion of the chain corresponds to 23 to 269 (LNPKFLTPSG…ENIENPENPS (247 aa)). A disulfide bridge connects residues C68 and C78. N-linked (GlcNAc...) asparagine glycans are attached at residues N77, N81, and N90. C109 and C122 are joined by a disulfide. Residues 163-260 (APENLTLRNL…IHWGSNTSKE (98 aa)) enclose the Fibronectin type-III domain. Residues N166 and N171 are each glycosylated (N-linked (GlcNAc...) asparagine). Residues 244 to 248 (WSDWS) carry the WSXWS motif motif. Residues 270-290 (LFALEAVLIPLGSMGLIVSLI) form a helical membrane-spanning segment. Residues 291–379 (CVYCWLERTM…PPCYTLKPEP (89 aa)) lie on the Cytoplasmic side of the membrane. Positions 299-307 (TMPRIPTLK) match the Box 1 motif motif. A Phosphothreonine modification is found at T305. Positions 349-370 (PPKGGEGPGGSPCSQHSPYWAP) are disordered.

It belongs to the type I cytokine receptor family. Type 5 subfamily. The gamma subunit is common to the IL2, IL4, IL7, IL15, IL21 and probably also the IL13 receptors. Interacts with SHB upon interleukin stimulation.

Its subcellular location is the cell membrane. It is found in the cell surface. Common subunit for the receptors for a variety of interleukins. Probably in association with IL15RA, involved in the stimulation of neutrophil phagocytosis by IL15. In Bos taurus (Bovine), this protein is Cytokine receptor common subunit gamma (IL2RG).